Reading from the N-terminus, the 1120-residue chain is DNA-directed RNA polymerase subunit beta (1120 aa).

The protein belongs to the RNA polymerase beta chain family. As to quaternary structure, in plastids the minimal PEP RNA polymerase catalytic core is composed of four subunits: alpha, beta, beta', and beta''. When a (nuclear-encoded) sigma factor is associated with the core the holoenzyme is formed, which can initiate transcription.

The protein localises to the plastid. It is found in the chloroplast. It carries out the reaction RNA(n) + a ribonucleoside 5'-triphosphate = RNA(n+1) + diphosphate. Its function is as follows. DNA-dependent RNA polymerase catalyzes the transcription of DNA into RNA using the four ribonucleoside triphosphates as substrates. This is DNA-directed RNA polymerase subunit beta from Gracilaria tenuistipitata var. liui (Red alga).